The following is an 87-amino-acid chain: Omega-lycotoxin-Am1g (87 aa).

An N-terminal signal peptide occupies residues 1-17 (MKLSIFFVLFFIAIAYC). A propeptide spanning residues 18 to 40 (QPEFLDDEEDEVEETLPVAEEGR) is cleaved from the precursor. 4 cysteine pairs are disulfide-bonded: C44–C59, C51–C64, C58–C84, and C66–C82.

The protein belongs to the neurotoxin omega-lctx family. As to expression, expressed by the venom gland.

The protein resides in the secreted. In terms of biological role, modulates Cav2.1/CACNA1A voltage-gated calcium channels (P/Q-type currents) in rat cerebellar Purkinje cells and hippocampal CA1-CA3 neurons. At saturating concentrations (&gt;10 nM) decelerates activation kinetics and slightly increases peak amplitude without affecting deactivation kinetics. In vivo, does not cause death when intravenously injected into mice. In rat models, through its activity on Cav2.1/CACNA1A, has an ameliorative effect on memory defects provoked by hyperstimulation of N-methyl-D-aspartate receptors (NMDARs) in the hippocampus. The protein is Omega-lycotoxin-Am1g of Alopecosa marikovskyi (Wolf spider).